Here is a 637-residue protein sequence, read N- to C-terminus: DNA mismatch repair protein MutL (637 aa).

Residues 353-371 (GQGQRPVSSASMPSASRQA) are compositionally biased toward polar residues. The segment at 353-444 (GQGQRPVSSA…SEAASETPHD (92 aa)) is disordered. Residues 378 to 389 (DWIKEGVQDWDW) show a composition bias toward basic and acidic residues. Pro residues predominate over residues 396 to 406 (PQNPPQNPPPG). Basic and acidic residues predominate over residues 430–444 (SGKELSEAASETPHD).

The protein belongs to the DNA mismatch repair MutL/HexB family.

Functionally, this protein is involved in the repair of mismatches in DNA. It is required for dam-dependent methyl-directed DNA mismatch repair. May act as a 'molecular matchmaker', a protein that promotes the formation of a stable complex between two or more DNA-binding proteins in an ATP-dependent manner without itself being part of a final effector complex. The chain is DNA mismatch repair protein MutL from Beijerinckia indica subsp. indica (strain ATCC 9039 / DSM 1715 / NCIMB 8712).